Here is a 154-residue protein sequence, read N- to C-terminus: Cindoxin (154 aa).

The Flavodoxin-like domain maps to 3 to 145 (ALILYGTETG…TAEEWAREIL (143 aa)). Residues 9-13 (TETGN) and 89-120 (VFGL…TQVG) contribute to the FMN site.

The cofactor is FMN.

Its function is as follows. Involved in the degradation of cineol (eucalyptol). The FMN protein, cindoxin, shuttles electrons between the FAD-containing cindoxin reductase (CinB) and 1,8-cineole 2-endo-monooxygenase (CinA). The chain is Cindoxin (cinC) from Citrobacter braakii.